The following is a 414-amino-acid chain: Eukaryotic initiation factor 4A-1 (414 aa).

The Q motif motif lies at 41–69 (ESFDDMGLQENLLRGIYAYGFEKPSAIQQ). The 171-residue stretch at 72–242 (IVPFCKGLDV…RKFMNKPVRI (171 aa)) folds into the Helicase ATP-binding domain. ATP is bound at residue 85 to 92 (AQSGTGKT). Positions 190–193 (DEAD) match the DEAD box motif. The Helicase C-terminal domain maps to 253 to 414 (GIKQFYVNVE…ELPANVADLL (162 aa)).

Belongs to the DEAD box helicase family. eIF4A subfamily. As to quaternary structure, eIF4F is a multi-subunit complex, the composition of which varies with external and internal environmental conditions. It is composed of at least EIF4A, EIF4E and EIF4G.

It catalyses the reaction ATP + H2O = ADP + phosphate + H(+). In terms of biological role, ATP-dependent RNA helicase which is a subunit of the eIF4F complex involved in cap recognition and is required for mRNA binding to ribosome. In the current model of translation initiation, eIF4A unwinds RNA secondary structures in the 5'-UTR of mRNAs which is necessary to allow efficient binding of the small ribosomal subunit, and subsequent scanning for the initiator codon. The polypeptide is Eukaryotic initiation factor 4A-1 (Oryza sativa subsp. japonica (Rice)).